Reading from the N-terminus, the 1061-residue chain is Isoleucine--tRNA ligase (1061 aa).

A 'HIGH' region motif is present at residues 50 to 60 (PYTSGSAHMGT). A 'KMSKS' region motif is present at residues 604 to 608 (KMSKS). ATP is bound at residue Lys-607.

Belongs to the class-I aminoacyl-tRNA synthetase family. IleS type 2 subfamily. As to quaternary structure, monomer. Zn(2+) serves as cofactor.

Its subcellular location is the cytoplasm. The enzyme catalyses tRNA(Ile) + L-isoleucine + ATP = L-isoleucyl-tRNA(Ile) + AMP + diphosphate. Its function is as follows. Catalyzes the attachment of isoleucine to tRNA(Ile). As IleRS can inadvertently accommodate and process structurally similar amino acids such as valine, to avoid such errors it has two additional distinct tRNA(Ile)-dependent editing activities. One activity is designated as 'pretransfer' editing and involves the hydrolysis of activated Val-AMP. The other activity is designated 'posttransfer' editing and involves deacylation of mischarged Val-tRNA(Ile). The sequence is that of Isoleucine--tRNA ligase from Natronomonas pharaonis (strain ATCC 35678 / DSM 2160 / CIP 103997 / JCM 8858 / NBRC 14720 / NCIMB 2260 / Gabara) (Halobacterium pharaonis).